Consider the following 314-residue polypeptide: Pathogenicity locus probable regulatory protein HrpR (314 aa).

A Sigma-54 factor interaction domain is found at 11 to 239; that stretch reads TRWNVTALSA…LKSAANAICP (229 aa). Residues 39–46 and 101–110 contribute to the ATP site; these read GETGTGKD and SNGGTLYLDE. The segment at residues 281-300 is a DNA-binding region (H-T-H motif); that stretch reads FDAVLEELELPRRTLYHRMK.

Its function is as follows. Member of the two-component regulatory system HrpR/HrpS that regulates the activation of the sigma factor hrpL which itself induces the expression of hprD as well as other hrp loci which are involved in plant pathogenicity, hrmA and avr genes. Probably interacts with sigma-54. The protein is Pathogenicity locus probable regulatory protein HrpR (hrpR) of Pseudomonas syringae pv. syringae.